Consider the following 968-residue polypeptide: RNA polymerase-associated protein RapA (968 aa).

Residues 164–334 (DVGRRHAPRV…FARLRLLDPN (171 aa)) form the Helicase ATP-binding domain. Position 177–184 (177–184 (DEVGLGKT)) interacts with ATP. The short motif at 280-283 (DEAH) is the DEAH box element. The 173-residue stretch at 490 to 662 (RVEWLMGYLT…YLASPDQTEG (173 aa)) folds into the Helicase C-terminal domain.

The protein belongs to the SNF2/RAD54 helicase family. RapA subfamily. As to quaternary structure, interacts with the RNAP. Has a higher affinity for the core RNAP than for the holoenzyme. Its ATPase activity is stimulated by binding to RNAP.

Functionally, transcription regulator that activates transcription by stimulating RNA polymerase (RNAP) recycling in case of stress conditions such as supercoiled DNA or high salt concentrations. Probably acts by releasing the RNAP, when it is trapped or immobilized on tightly supercoiled DNA. Does not activate transcription on linear DNA. Probably not involved in DNA repair. This Escherichia coli O1:K1 / APEC protein is RNA polymerase-associated protein RapA.